The chain runs to 370 residues: tRNA-specific 2-thiouridylase MnmA (370 aa).

ATP is bound by residues 12-19 and methionine 38; that span reads GLSGGVDS. Residues 98 to 100 form an interaction with target base in tRNA region; sequence NPD. Catalysis depends on cysteine 103, which acts as the Nucleophile. Cysteines 103 and 201 form a disulfide. Glycine 127 lines the ATP pocket. An interaction with tRNA region spans residues 151-153; it reads KDQ. Residue cysteine 201 is the Cysteine persulfide intermediate of the active site. Positions 319–320 are interaction with tRNA; that stretch reads RY.

This sequence belongs to the MnmA/TRMU family.

It localises to the cytoplasm. It carries out the reaction S-sulfanyl-L-cysteinyl-[protein] + uridine(34) in tRNA + AH2 + ATP = 2-thiouridine(34) in tRNA + L-cysteinyl-[protein] + A + AMP + diphosphate + H(+). Functionally, catalyzes the 2-thiolation of uridine at the wobble position (U34) of tRNA, leading to the formation of s(2)U34. This Verminephrobacter eiseniae (strain EF01-2) protein is tRNA-specific 2-thiouridylase MnmA.